The chain runs to 497 residues: 3-octaprenyl-4-hydroxybenzoate carboxy-lyase (497 aa).

Residue asparagine 172 participates in Mn(2+) binding. Residues 175 to 177, 189 to 191, and 194 to 195 each bind prenylated FMN; these read IYR, RWL, and RG. Glutamate 238 contacts Mn(2+). Aspartate 287 (proton donor) is an active-site residue.

This sequence belongs to the UbiD family. In terms of assembly, homohexamer. It depends on prenylated FMN as a cofactor. Requires Mn(2+) as cofactor.

It localises to the cell membrane. The catalysed reaction is a 4-hydroxy-3-(all-trans-polyprenyl)benzoate + H(+) = a 2-(all-trans-polyprenyl)phenol + CO2. It functions in the pathway cofactor biosynthesis; ubiquinone biosynthesis. Catalyzes the decarboxylation of 3-octaprenyl-4-hydroxy benzoate to 2-octaprenylphenol, an intermediate step in ubiquinone biosynthesis. In Enterobacter sp. (strain 638), this protein is 3-octaprenyl-4-hydroxybenzoate carboxy-lyase.